Here is a 162-residue protein sequence, read N- to C-terminus: Balbiani ring protein 2 (162 aa).

Positions 1 to 31 (CDDAMRKTESDKCTNIGGKFDPSTCKCTPET) are last constant region. The last Cys-1 repeat stretch occupies residues 32-51 (VTEGPTTCLESSESDEVTTK). A unique region region spans residues 52–162 (KPCDCTCAPD…VKGLEDILNS (111 aa)).

As to expression, salivary gland.

The protein localises to the secreted. Functionally, used by the larvae to construct a supramolecular structure, the larval tube. The chain is Balbiani ring protein 2 (BR2) from Chironomus pallidivittatus (Midge).